Here is a 457-residue protein sequence, read N- to C-terminus: MYNCAIILAAGKGKRMKSSMPKVVHKVCGKEMVNHVIDNVRKANIKDVNLVIGKGSETVKEHTKDRNVTYSMQEEQLGTGHAVICAEEFLKDKKGTVAIFTGDAPLITNETIQQLFEFHNSGKYAATLISSTVQDPTGYGRIIREASGEVKKIVEHKDCNEEELKVNEINSGMYCFDIEVLLNSLKNLNNDNSQGEYYLTDVIEITKKSGDKVGAIVVPYEEIMGVNSRVQLSEAEIVMRKRINHKHMVNGVTFIDCESTYIDVDVEIGNDTIIYPGCVIQGNTRIKEECTLYSNSRICNSVIGSGVIVENSVILESHVGEGTTVGPFAYIRPETKIGKSARIGDFVEIKKSTIGDNTKVSHLTYIGDAEVGSKCNFGCGTVVVNYDGQKKQKTIIGNNAFIGCNTNLISPVKVNDNTYIAAGSTITKEVPEGSLAIARSKQINKEGWLDKKGLLKK.

The interval 1 to 229 (MYNCAIILAA…YEEIMGVNSR (229 aa)) is pyrophosphorylase. UDP-N-acetyl-alpha-D-glucosamine-binding positions include 8–11 (LAAG), K22, Q73, and 78–79 (GT). Residue D103 coordinates Mg(2+). The UDP-N-acetyl-alpha-D-glucosamine site is built by G140, E155, N170, and N227. Position 227 (N227) interacts with Mg(2+). Residues 230 to 250 (VQLSEAEIVMRKRINHKHMVN) form a linker region. Positions 251 to 457 (GVTFIDCEST…WLDKKGLLKK (207 aa)) are N-acetyltransferase. Residues R332 and K350 each contribute to the UDP-N-acetyl-alpha-D-glucosamine site. Catalysis depends on H362, which acts as the Proton acceptor. Y365 and N376 together coordinate UDP-N-acetyl-alpha-D-glucosamine. Residues 385–386 (NY), A422, and R439 contribute to the acetyl-CoA site.

It in the N-terminal section; belongs to the N-acetylglucosamine-1-phosphate uridyltransferase family. This sequence in the C-terminal section; belongs to the transferase hexapeptide repeat family. Homotrimer. It depends on Mg(2+) as a cofactor.

It localises to the cytoplasm. The catalysed reaction is alpha-D-glucosamine 1-phosphate + acetyl-CoA = N-acetyl-alpha-D-glucosamine 1-phosphate + CoA + H(+). It carries out the reaction N-acetyl-alpha-D-glucosamine 1-phosphate + UTP + H(+) = UDP-N-acetyl-alpha-D-glucosamine + diphosphate. Its pathway is nucleotide-sugar biosynthesis; UDP-N-acetyl-alpha-D-glucosamine biosynthesis; N-acetyl-alpha-D-glucosamine 1-phosphate from alpha-D-glucosamine 6-phosphate (route II): step 2/2. The protein operates within nucleotide-sugar biosynthesis; UDP-N-acetyl-alpha-D-glucosamine biosynthesis; UDP-N-acetyl-alpha-D-glucosamine from N-acetyl-alpha-D-glucosamine 1-phosphate: step 1/1. It functions in the pathway bacterial outer membrane biogenesis; LPS lipid A biosynthesis. Functionally, catalyzes the last two sequential reactions in the de novo biosynthetic pathway for UDP-N-acetylglucosamine (UDP-GlcNAc). The C-terminal domain catalyzes the transfer of acetyl group from acetyl coenzyme A to glucosamine-1-phosphate (GlcN-1-P) to produce N-acetylglucosamine-1-phosphate (GlcNAc-1-P), which is converted into UDP-GlcNAc by the transfer of uridine 5-monophosphate (from uridine 5-triphosphate), a reaction catalyzed by the N-terminal domain. The protein is Bifunctional protein GlmU of Clostridium botulinum (strain ATCC 19397 / Type A).